We begin with the raw amino-acid sequence, 358 residues long: Type II restriction enzyme SacI (358 aa).

It catalyses the reaction Endonucleolytic cleavage of DNA to give specific double-stranded fragments with terminal 5'-phosphates.. Functionally, a subtype P restriction enzyme that recognizes the double-stranded sequence 5'-GAGCTC-3' and cleaves after T-5. The chain is Type II restriction enzyme SacI from Streptomyces achromogenes.